A 78-amino-acid chain; its full sequence is MALFEDIQAVIAEQLNVDAAQVTPEAEFVKDLGADSLDVVELIMALEEKFGVEIPDEQAEKIVNVGDVVKYIEDNKLA.

Positions 1 to 76 (MALFEDIQAV…DVVKYIEDNK (76 aa)) constitute a Carrier domain. O-(pantetheine 4'-phosphoryl)serine is present on S36.

Belongs to the acyl carrier protein (ACP) family. In terms of processing, 4'-phosphopantetheine is transferred from CoA to a specific serine of apo-ACP by AcpS. This modification is essential for activity because fatty acids are bound in thioester linkage to the sulfhydryl of the prosthetic group.

It is found in the cytoplasm. It participates in lipid metabolism; fatty acid biosynthesis. Its function is as follows. Carrier of the growing fatty acid chain in fatty acid biosynthesis. The polypeptide is Acyl carrier protein (Helicobacter pylori (strain G27)).